A 458-amino-acid chain; its full sequence is Argininosuccinate lyase (458 aa).

It belongs to the lyase 1 family. Argininosuccinate lyase subfamily.

It localises to the cytoplasm. The catalysed reaction is 2-(N(omega)-L-arginino)succinate = fumarate + L-arginine. It functions in the pathway amino-acid biosynthesis; L-arginine biosynthesis; L-arginine from L-ornithine and carbamoyl phosphate: step 3/3. This chain is Argininosuccinate lyase, found in Geotalea daltonii (strain DSM 22248 / JCM 15807 / FRC-32) (Geobacter daltonii).